A 155-amino-acid polypeptide reads, in one-letter code: Endoribonuclease YbeY (155 aa).

3 residues coordinate Zn(2+): His-114, His-118, and His-124.

This sequence belongs to the endoribonuclease YbeY family. Requires Zn(2+) as cofactor.

The protein localises to the cytoplasm. Its function is as follows. Single strand-specific metallo-endoribonuclease involved in late-stage 70S ribosome quality control and in maturation of the 3' terminus of the 16S rRNA. The protein is Endoribonuclease YbeY of Escherichia coli O1:K1 / APEC.